A 123-amino-acid chain; its full sequence is Small ribosomal subunit protein uS12 (123 aa).

D89 carries the 3-methylthioaspartic acid modification.

It belongs to the universal ribosomal protein uS12 family. Part of the 30S ribosomal subunit. Contacts proteins S8 and S17. May interact with IF1 in the 30S initiation complex.

Functionally, with S4 and S5 plays an important role in translational accuracy. In terms of biological role, interacts with and stabilizes bases of the 16S rRNA that are involved in tRNA selection in the A site and with the mRNA backbone. Located at the interface of the 30S and 50S subunits, it traverses the body of the 30S subunit contacting proteins on the other side and probably holding the rRNA structure together. The combined cluster of proteins S8, S12 and S17 appears to hold together the shoulder and platform of the 30S subunit. The chain is Small ribosomal subunit protein uS12 from Mesorhizobium japonicum (strain LMG 29417 / CECT 9101 / MAFF 303099) (Mesorhizobium loti (strain MAFF 303099)).